We begin with the raw amino-acid sequence, 399 residues long: MNETLFTGISQLVTPAPGVQRGAAMRELTRLDDAAMLVRDGVIAWTGSRQQAPASTSIHDLGGVAVVPGLVDPHTHSVWAGDRLADFEARISGVPYEEILARGGGIRSTMRATAASSVEALVALARPRLEALRDSGATTVEVKSGYGLDFAAERRMLQAVQILQAEFQLIPTLLIHVPPQDHRAAYVQGVCEDLIPWVAAEHLATAVDVFCEKEAFSVEETRQILAAAQQHGLQVKVHADQFQAIGGTELACQLGALSVDHLEASGQAQIEALAASDTVATILPGVTLHLGLPAAPGRRLIDAGAAVAVGTDLNPGSSPVFSSQLVLALAVRLCGLTPPEALSACTVNAAHALGLRDRGALAPGQRADFLALHSSDWRDLAYTLGASPVRDVWQAGTRV.

Fe(3+) contacts are provided by His-74 and His-76. 2 residues coordinate Zn(2+): His-74 and His-76. The 4-imidazolone-5-propanoate site is built by Arg-83, Tyr-146, and His-176. Tyr-146 contacts N-formimidoyl-L-glutamate. His-238 provides a ligand contact to Fe(3+). His-238 serves as a coordination point for Zn(2+). Residue Gln-241 participates in 4-imidazolone-5-propanoate binding. A Fe(3+)-binding site is contributed by Asp-312. Zn(2+) is bound at residue Asp-312. 2 residues coordinate N-formimidoyl-L-glutamate: Asn-314 and Gly-316. Position 317 (Ser-317) interacts with 4-imidazolone-5-propanoate.

The protein belongs to the metallo-dependent hydrolases superfamily. HutI family. Zn(2+) serves as cofactor. Fe(3+) is required as a cofactor.

It localises to the cytoplasm. The enzyme catalyses 4-imidazolone-5-propanoate + H2O = N-formimidoyl-L-glutamate. Its pathway is amino-acid degradation; L-histidine degradation into L-glutamate; N-formimidoyl-L-glutamate from L-histidine: step 3/3. Its function is as follows. Catalyzes the hydrolytic cleavage of the carbon-nitrogen bond in imidazolone-5-propanoate to yield N-formimidoyl-L-glutamate. It is the third step in the universal histidine degradation pathway. The protein is Imidazolonepropionase of Deinococcus deserti (strain DSM 17065 / CIP 109153 / LMG 22923 / VCD115).